The primary structure comprises 696 residues: MANLASLLRLPGNWKSSQWQILAGPVLILLILSMMVLPLPPFLLDLLFTFNIALSIMVLLVAMFTRRTLDFAAFPTILLFTTLLRLSLNVASTRIILMEGHTGSAAAGRVVEAFGHFLVGGNFAIGIVVFIILILINFMVITKGAGRIAEVGARFVLDGMPGKQMAIDADLNAGIINEEEAKKRRKEVSLESDFYGSMDGASKFVRGDAIAGLMILVINVVGGLVVGVAQHNMALNDAASTYTLLTIGDGLVAQIPALIISTAAGVIVTRVATDEDVGQQMVTQLFDNPRVLMLTAGVLGLLGLVPGMPNFVFLFFTAALAGLGWYILKRHSSPQVQQQKELEQVEKQNRVVEASWEDVQLEDPLSMEVGYRLIPMVDNRQNGELLGRISGIRKKFAQEMGYLPPVVHIRDNMEVKPSSYRILMKGVEIGHGEAHPGRWLAINPGNAVGTLEGDNTQEPAFGLPAVWIDDSLREQAQVQGYTVVAASTVIATHFNHVLNQYAAELFGRQEAQMLFDRVSKELPKMTENMIPDMLSLTVLHKVLQNLLAEQVPIRDMRTILEALAEHAPEQKDPAELTAVVRVALRRAITQHWFGDKEEIQVIGLDAGLERLLLQAMQSGGGLEPGLAENIEQQALDAVRRQEMSGGVPVLLVNHALRSLLSRFLRRSLPQLAVLSNMEISEGRHIRMTSMIGGQNN.

8 helical membrane passes run 24–44, 45–65, 71–91, 121–141, 209–229, 247–267, 296–316, and 478–498; these read GPVL…PFLL, DLLF…AMFT, FAAF…LNVA, GNFA…FMVI, AIAG…VGVA, IGDG…AGVI, AGVL…FLFF, and VQGY…NHVL.

The protein belongs to the FHIPEP (flagella/HR/invasion proteins export pore) family.

It localises to the cell inner membrane. In terms of biological role, required for formation of the rod structure of the flagellar apparatus. Together with FliI and FliH, may constitute the export apparatus of flagellin. This chain is Flagellar biosynthesis protein FlhA (flhA), found in Proteus mirabilis.